The primary structure comprises 391 residues: Protein NirF (391 aa).

Its subcellular location is the cytoplasm. In terms of biological role, required for the biosynthesis of heme d1 of nitrite reductase. Could have a dehydrogenase activity yielding sirohydrochlorin from precorrin-2 or dehydrogenation of propionate side chain C17. The polypeptide is Protein NirF (nirF) (Stutzerimonas stutzeri (Pseudomonas stutzeri)).